We begin with the raw amino-acid sequence, 291 residues long: UDP-N-acetylenolpyruvoylglucosamine reductase (291 aa).

The FAD-binding PCMH-type domain occupies 22-187 (RIGGPARYFK…ASATFQLTKD (166 aa)). The active site involves Arg166. Cys214 serves as the catalytic Proton donor. The active site involves Glu283.

Belongs to the MurB family. The cofactor is FAD.

It is found in the cytoplasm. It catalyses the reaction UDP-N-acetyl-alpha-D-muramate + NADP(+) = UDP-N-acetyl-3-O-(1-carboxyvinyl)-alpha-D-glucosamine + NADPH + H(+). The protein operates within cell wall biogenesis; peptidoglycan biosynthesis. Its function is as follows. Cell wall formation. The protein is UDP-N-acetylenolpyruvoylglucosamine reductase of Chlamydia trachomatis serovar L2 (strain ATCC VR-902B / DSM 19102 / 434/Bu).